The following is a 669-amino-acid chain: MTAAAGSAGHAAVPLLLCALLVPGGAYVLDDSDGLGREFDGVGAVSGGGATSRLLVNYPEPYRSQILDYLFKPNFGASLHILKVEIGGDGQTTDGTEPSHMHYALDENFFRGYEWWLMKEAKKRNPNIILMGLPWSFPGWIGKGFNWPYVNLQLTAYYIMTWIVGAKHYHDLDIDYIGIWNERSFDINYIKVLRRMLNYQGLDRVKIIASDNLWEPISASMLLDSELLKVIDVIGAHYPGTHTVKDAKLTKKKLWSSEDFSTLNSDVGAGCLGRILNQNYVNGYMTATIAWNLVASYYEQLPYGRCGLMTAQEPWSGHYVVESPIWVSAHTTQFTQPGWYYLKTVGHLEKGGSYVALTDGLGNLTIIVETMSHKQSACIRPFLPYFNVSRQFATFVLKGSFSEIPELQVWYTKLGKPSERYLFKQLDSLWLLDSSSTFTLELQEDEIFTLTTLTVGSKGSYPLPPKSEPFPQIYEDDFDVDYPFFSEAPNFADQTGVFEYFTNIEDPGEHRFTLRQVLNQRPITWAADAYNTISIIGDYKWSNLTVRCDVYIETPEKGGVFIAGRVNKGGILIRSARGIFFWIFANGTYRVTGDLAGWVIYALGRVDVTAKKWYTLTLIIKGRLSSGMLNGKTVWKNIPVSFPKNGWAAIGTHSFEFAQFDNFHVEATR.

The first 26 residues, 1 to 26, serve as a signal peptide directing secretion; that stretch reads MTAAAGSAGHAAVPLLLCALLVPGGA. Residues T93, W135, and N181 each contribute to the substrate site. Catalysis depends on E182, which acts as the Proton donor/acceptor. The active-site Nucleophile is the E258. An intrachain disulfide couples C271 to C378. N363 is a glycosylation site (N-linked (GlcNAc...) asparagine). Position 380 (R380) interacts with substrate. N-linked (GlcNAc...) asparagine glycans are attached at residues N387, N543, and N586.

This sequence belongs to the glycosyl hydrolase 59 family.

The protein resides in the lysosome. It carries out the reaction a beta-D-galactosyl-(1&lt;-&gt;1')-N-acylsphing-4-enine + H2O = an N-acylsphing-4-enine + D-galactose. The enzyme catalyses beta-D-galactosyl-(1&lt;-&gt;1)-sphing-4-enine + H2O = sphing-4-enine + D-galactose. It catalyses the reaction a D-galactosylceramide + H2O = an N-acyl-sphingoid base + D-galactose. Its function is as follows. Hydrolyzes the galactose ester bonds of glycolipids such as galactosylceramide and galactosylsphingosine. Enzyme with very low activity responsible for the lysosomal catabolism of galactosylceramide, a major lipid in myelin, kidney and epithelial cells of small intestine and colon. In Canis lupus familiaris (Dog), this protein is Galactocerebrosidase.